Consider the following 278-residue polypeptide: Putative non-heme haloperoxidase (278 aa).

Positions 24 to 240 constitute an AB hydrolase-1 domain; the sequence is PLVFLHGLSV…STAKITNASF (217 aa). Active-site residues include S97 and D221.

This sequence belongs to the AB hydrolase superfamily.

In Mycobacterium (Mycobacteriophage D29), this protein is Putative non-heme haloperoxidase (59.2).